Here is a 73-residue protein sequence, read N- to C-terminus: Methionyl-tRNA formyltransferase (73 aa).

This sequence belongs to the Fmt family.

It catalyses the reaction L-methionyl-tRNA(fMet) + (6R)-10-formyltetrahydrofolate = N-formyl-L-methionyl-tRNA(fMet) + (6S)-5,6,7,8-tetrahydrofolate + H(+). Its function is as follows. Attaches a formyl group to the free amino group of methionyl-tRNA(fMet). The formyl group appears to play a dual role in the initiator identity of N-formylmethionyl-tRNA by promoting its recognition by IF2 and preventing the misappropriation of this tRNA by the elongation apparatus. This Rickettsia akari protein is Methionyl-tRNA formyltransferase (fmt).